We begin with the raw amino-acid sequence, 587 residues long: Bifunctional lycopene cyclase/phytoene synthase (587 aa).

Positions M1 to Y236 are lycopene beta-cyclase. 7 helical membrane passes run Y5 to W25, K35 to V55, N65 to I85, S91 to A111, L116 to G136, I145 to I165, and L218 to I238. Residues C243–K587 form a phytoene synthase region.

This sequence in the N-terminal section; belongs to the lycopene beta-cyclase family. The protein in the C-terminal section; belongs to the phytoene/squalene synthase family.

It localises to the membrane. It carries out the reaction all-trans-lycopene = gamma-carotene. It catalyses the reaction gamma-carotene = all-trans-beta-carotene. The enzyme catalyses 2 (2E,6E,10E)-geranylgeranyl diphosphate = 15-cis-phytoene + 2 diphosphate. It functions in the pathway carotenoid biosynthesis; beta-carotene biosynthesis. It participates in carotenoid biosynthesis; phytoene biosynthesis; all-trans-phytoene from geranylgeranyl diphosphate: step 1/1. Bifunctional enzyme that catalyzes the reactions from geranylgeranyl diphosphate to phytoene (phytoene synthase) and lycopene to beta-carotene via the intermediate gamma-carotene (lycopene cyclase). In Aspergillus oryzae (strain ATCC 42149 / RIB 40) (Yellow koji mold), this protein is Bifunctional lycopene cyclase/phytoene synthase.